A 541-amino-acid chain; its full sequence is uncharacterized protein (541 aa).

Helical transmembrane passes span 99–119, 131–153, 165–185, 187–207, 224–244, 256–276, 325–345, 367–387, 409–429, 439–459, 472–494, and 508–528; these read WIVVVQISLIAFVVTFGSSVY, GVSISVSSLGSCVFLVGFGFGSL, FVVYFCTLLMFTLFQIGGGCA, NIWTLVILRFFQGFFGSTPLS, YVLPGFCTFPFLGPIFGPIIG, WVFWINMIMGAVVIVIIFFFM, LLITEPIVVCFTLYLTVVYII, IGLSFIGIGIGIVLAGACTPI, LYPLFFGSIMLPISMFWFAWT, WIVPLISSIFFGWSLLFVFFV, AASALAAATLVRYAASGGMSLVG, and SLLGFISVGMIPIPFLFFIYG.

Belongs to the major facilitator superfamily. CAR1 family.

The protein localises to the membrane. This is an uncharacterized protein from Schizosaccharomyces pombe (strain 972 / ATCC 24843) (Fission yeast).